The sequence spans 517 residues: NADH-quinone oxidoreductase subunit N (517 aa).

The next 14 helical transmembrane spans lie at 14–34 (LAPT…EAFV), 40–60 (HMVQ…MVVV), 77–97 (GPAL…LLLI), 131–151 (ATEV…FVAA), 154–174 (LLTM…LCAL), 189–209 (YFLL…LVYG), 238–258 (VLLF…AAAA), 272–292 (PTPI…GALL), 306–326 (FTPI…VLAV), 334–354 (LLAY…LAPS), 362–382 (MFYL…VTLV), 404–424 (FYAG…LTSG), 451–471 (SMVL…SEPG), and 481–501 (GWLT…LGVV).

Belongs to the complex I subunit 2 family. In terms of assembly, NDH-1 is composed of 14 different subunits. Subunits NuoA, H, J, K, L, M, N constitute the membrane sector of the complex.

The protein localises to the cell membrane. The enzyme catalyses a quinone + NADH + 5 H(+)(in) = a quinol + NAD(+) + 4 H(+)(out). Its function is as follows. NDH-1 shuttles electrons from NADH, via FMN and iron-sulfur (Fe-S) centers, to quinones in the respiratory chain. The immediate electron acceptor for the enzyme in this species is believed to be a menaquinone. Couples the redox reaction to proton translocation (for every two electrons transferred, four hydrogen ions are translocated across the cytoplasmic membrane), and thus conserves the redox energy in a proton gradient. The chain is NADH-quinone oxidoreductase subunit N from Salinispora arenicola (strain CNS-205).